The following is a 176-amino-acid chain: Small ribosomal subunit protein uS5 (176 aa).

The S5 DRBM domain maps to 18-81 (FEEKMLFVNR…SIARKNMISV (64 aa)).

The protein belongs to the universal ribosomal protein uS5 family. Part of the 30S ribosomal subunit. Contacts proteins S4 and S8.

In terms of biological role, with S4 and S12 plays an important role in translational accuracy. Its function is as follows. Located at the back of the 30S subunit body where it stabilizes the conformation of the head with respect to the body. The protein is Small ribosomal subunit protein uS5 of Deinococcus deserti (strain DSM 17065 / CIP 109153 / LMG 22923 / VCD115).